The chain runs to 233 residues: Lactate utilization protein C (233 aa).

This sequence belongs to the LutC/YkgG family.

Is involved in L-lactate degradation and allows cells to grow with lactate as the sole carbon source. The sequence is that of Lactate utilization protein C from Oceanobacillus iheyensis (strain DSM 14371 / CIP 107618 / JCM 11309 / KCTC 3954 / HTE831).